The following is a 164-amino-acid chain: Urocortin-3 (164 aa).

Residues 1–23 (MLMPTYFLLPLLLLLGGPRTSLS) form the signal peptide. A propeptide spanning residues 24-121 (HKFYNTGPVF…PDKPKSDRGT (98 aa)) is cleaved from the precursor. Residues 58-120 (SFGHLPTQDP…YPDKPKSDRG (63 aa)) are disordered. Residues 110-120 (LYPDKPKSDRG) are compositionally biased toward basic and acidic residues. At Ile-160 the chain carries Isoleucine amide.

This sequence belongs to the sauvagine/corticotropin-releasing factor/urotensin I family. As to quaternary structure, binds with high affinity to CRF receptors 2-alpha and 2-beta. As to expression, expressed in some areas of the brain including the hypothalamus, amygdala, and brainstem, but is not evident in the cerebellum, pituitary, or cerebral cortex; it is also expressed peripherally in small intestine and skin.

It localises to the secreted. Its function is as follows. Suppresses food intake, delays gastric emptying and decreases heat-induced edema. Might represent an endogenous ligand for maintaining homeostasis after stress. This is Urocortin-3 (Ucn3) from Mus musculus (Mouse).